The chain runs to 200 residues: Pyridoxine/pyridoxamine 5'-phosphate oxidase (200 aa).

Residues 49–54, 64–65, arginine 70, lysine 71, and glutamine 93 contribute to the FMN site; these read RMLLLK and YT. Lysine 54 provides a ligand contact to substrate. Residues tyrosine 111, arginine 115, and serine 119 each contribute to the substrate site. Residues 128–129 and tryptophan 173 each bind FMN; that span reads QS. 179-181 contacts substrate; the sequence is RLH. Position 183 (arginine 183) interacts with FMN.

The protein belongs to the pyridoxamine 5'-phosphate oxidase family. Homodimer. Requires FMN as cofactor.

The catalysed reaction is pyridoxamine 5'-phosphate + O2 + H2O = pyridoxal 5'-phosphate + H2O2 + NH4(+). It carries out the reaction pyridoxine 5'-phosphate + O2 = pyridoxal 5'-phosphate + H2O2. It participates in cofactor metabolism; pyridoxal 5'-phosphate salvage; pyridoxal 5'-phosphate from pyridoxamine 5'-phosphate: step 1/1. The protein operates within cofactor metabolism; pyridoxal 5'-phosphate salvage; pyridoxal 5'-phosphate from pyridoxine 5'-phosphate: step 1/1. In terms of biological role, catalyzes the oxidation of either pyridoxine 5'-phosphate (PNP) or pyridoxamine 5'-phosphate (PMP) into pyridoxal 5'-phosphate (PLP). The protein is Pyridoxine/pyridoxamine 5'-phosphate oxidase of Gluconobacter oxydans (strain 621H) (Gluconobacter suboxydans).